The chain runs to 441 residues: Protein eva-1 homolog C (441 aa).

Residues 1 to 23 (MLLPGRARQPPTPQPVQHPGLRR) form a disordered region. Residues 1–48 (MLLPGRARQPPTPQPVQHPGLRRQVEPPGQLLRLFYCTVLVCSKEISA) form the signal peptide. Residues 49 to 322 (LTDFSGYLTK…AYIRAHPERA (274 aa)) lie on the Extracellular side of the membrane. An N-linked (GlcNAc...) asparagine glycan is attached at Asn-62. In terms of domain architecture, SUEL-type lectin 1 spans 67–159 (ACDGDYLNLQ…KYLLVSFKCQ (93 aa)). A glycan (N-linked (GlcNAc...) asparagine) is linked at Asn-165. Residues 168–260 (VCEDQELKLH…KYLTVTYACV (93 aa)) enclose the SUEL-type lectin 2 domain. A helical membrane pass occupies residues 323–343 (ALLFVSSVCIGLALTLCALVI). Residues 344-441 (RESCAKDFRD…SLPRNMGQFY (98 aa)) lie on the Cytoplasmic side of the membrane. The interval 362 to 390 (VPGSDKVEEDSEDEEEEEDPSESDFPGEL) is disordered. The segment covering 368 to 383 (VEEDSEDEEEEEDPSE) has biased composition (acidic residues).

This sequence belongs to the EVA1 family. In terms of tissue distribution, ubiquitous.

It localises to the membrane. Functionally, binds heparin. The protein is Protein eva-1 homolog C (EVA1C) of Homo sapiens (Human).